The primary structure comprises 774 residues: ANTKNREPKVSSVFLCFSIFYVTVLLNCNHVYGQTSTVFACDVAKNTNVSSYGFCDNSLSVEDRVSDLVKRLTLQEKIGNLGNSAVEVSRLGIPKYEWWSEALHGVSNIGPGTHFSSLVPGATNFPMPILTAASFNTSLFQAIGSVVSNEARAMYNVGLAGLTYWSPNINIFRDPRWGRGQETPGEDPLLSSKYAAGYVKGLQQTDDGDSDKLKVAACCKHYTAYDVDNWKGVQRYTFDAVVSQQDLDDTFQPPFKSCVIDGNVASVMCSYNKVNGKPTCADPDLLKGVIRGKWKLNGYIVSDCDSVEVLYKDQHYTKTPEEAAAKTILSGLDLDCGSYLGQYTGGAVKQGLVDEASITNAVSNNFATLMRLGFFDGDPSKQPYGNLGPKDVCTPENQELAREAARQGIVLLKNSPRSLPLSSKAIKSLAVIGPNANATRVMIGNYEGIPCKYTSPLQGLTAFVPTSYAPGCPDVQCANAQIDDAAKIAASADATIIVVGANLAIEAESLDRVNILLPGQQQQLVNEVANVSKGPVILVIMSGGGMDVSFAKTNDKITSILWVGYPGEAGGAAIADVIFGSYNPSGRLPMTWYPQSYVEKVPMTNMNMRADPATGYPGRTYRFYKGETVFSFGDGMSFGTVEHKIVKAPQLVSVPLAEDHECRSLECKSLDVADKHCQNLAFDIHLSVKNMGKMSSSHSVLLFFTPPNVHNAPQKHLLGFEKVQLAGKSEGMVRFKVDVCNDLSVVDELGNRKVPLGDHMLHVGNLKHSLSVRI.

The signal sequence occupies residues 1–33; it reads ANTKNREPKVSSVFLCFSIFYVTVLLNCNHVYG. N-linked (GlcNAc...) asparagine glycans are attached at residues Asn48 and Asn136. Residue Asp303 is part of the active site. Residues Asn437 and Asn530 are each glycosylated (N-linked (GlcNAc...) asparagine).

Belongs to the glycoside hydrolase 3 family. Proteolytically cleaved in roots to form a 65 kDa protein.

It localises to the secreted. The protein resides in the extracellular space. It is found in the extracellular matrix. The catalysed reaction is Hydrolysis of (1-&gt;4)-beta-D-xylans, to remove successive D-xylose residues from the non-reducing termini.. It carries out the reaction Hydrolysis of terminal non-reducing alpha-L-arabinofuranoside residues in alpha-L-arabinosides.. Functionally, a bifunctional beta-xylosidase/alpha-L-arabinosidase, exo-enzyme that acts synergistically with endohydrolases. Releases xylose and arabinose from cell walls. Does not cleave xylan from oat spelts although xylan from oat spelts was degraded to xylose when this enzyme was used in combination with xylanase. Also releases xylose and arabinose from aryl glycosides, xylo-oligosaccharides, arabinan from sugar beet and arabino-oligosaccharides, arabinan from sugar beet and arabinoxylan from wheat. This chain is Beta-xylosidase/alpha-L-arabinofuranosidase 1, found in Medicago sativa subsp. varia (Alfalfa).